The sequence spans 606 residues: Thrombospondin-related anonymous protein (606 aa).

Positions 1–24 (MKLLGNSKYFFVVLLLCISVFLNG) are cleaved as a signal peptide. Residues 43-228 (DLHILLDGSG…TMIKPFLSKV (186 aa)) enclose the VWFA domain. The TSP type-1 domain maps to 235–281 (VALCGKWEEWSECSTTCDNGTKIRKRKVLHPNCAGEMTAPCKVRDCP). The interval 301–541 (PVEPIEPAEP…SKKQSKSNNG (241 aa)) is disordered. Low complexity-rich tracts occupy residues 409–425 (ENPF…IIAP), 440–450 (ELPNNLPESPS), and 459–479 (PNDN…IPNK). Composition is skewed to basic and acidic residues over residues 487–504 (NPYK…RSND) and 516–532 (DKLE…ENKS). The helical transmembrane segment at 544-564 (IAGGIIGGLAIIGCIGVGYNF) threads the bilayer.

In terms of assembly, interacts (via integrin-like A-domain) with Anopheles gambiae saglin/SG1F; the interaction probably promotes sporozoite invasion of salivary gland. Interacts (via integrin-like A-domain) with human AHSG; the interaction promotes sporozoite invasion of hepatocytes and formation of exoerythrocytic forms of parasites in human hepatoma HepG2 cells.

It is found in the cell membrane. The protein resides in the cytoplasm. In terms of biological role, promotes parasite ability to invade host hepatocytes. Promotes parasite ability to invade mosquito salivary glands. Required for sporozoite gliding motility. The protein is Thrombospondin-related anonymous protein of Plasmodium berghei (strain Anka).